We begin with the raw amino-acid sequence, 425 residues long: Voltage-dependent calcium channel gamma-8 subunit (425 aa).

Transmembrane regions (helical) follow at residues 19–39 (VQVL…TIAI), 129–149 (SIFP…VAAS), 158–178 (IILG…IGVI), and 208–228 (FGGL…NIYI). Phosphoserine is present on residues Ser-252 and Ser-255. Positions 272 to 304 (RRSRSSSRSSEPSPSRDASPGGPGGPGFASTDI) are disordered. Over residues 277–287 (SSRSSEPSPSR) the composition is skewed to low complexity. A helical membrane pass occupies residues 318–338 (VAAGLAGAGGGGGGAVGAFGG). Over residues 343-354 (AGGGGGGGGGAG) the composition is skewed to gly residues. 2 disordered regions span residues 343 to 365 (AGGG…ASGF) and 377 to 425 (GGGV…TTPV). Over residues 387–401 (PPAPPAPAPPAPSAP) the composition is skewed to pro residues. A compositionally biased stretch (polar residues) spans 412–425 (ASNTNTLNRKTTPV).

The protein belongs to the PMP-22/EMP/MP20 family. CACNG subfamily. As to quaternary structure, interacts with CACNA1C. Identified in a complex with the L-type calcium channel subunits CACNA1C, CACNA2D1 and either CACNB1 or CACNB2. Acts as an auxiliary subunit for AMPA-selective glutamate receptors (AMPARs). Found in a complex with GRIA1, GRIA2, GRIA3, GRIA4, CNIH2, CNIH3, CACNG2, CACNG3, CACNG4, CACNG5 and CACNG7. Interacts with CNIH2. Found in a complex with GRIA1, GRIA2, GRIA3, GRIA4, DLG4 and CNIH2. Palmitoylated. Probably palmitoylated by ZDHHC3 and ZDHHC7. Detected in heart left ventricle.

Its subcellular location is the cell membrane. It is found in the postsynaptic density membrane. In terms of biological role, regulates the activity of L-type calcium channels that contain CACNA1C as pore-forming subunit. Regulates the trafficking and gating properties of AMPA-selective glutamate receptors (AMPARs). Promotes their targeting to the cell membrane and synapses and modulates their gating properties by slowing their rates of activation, deactivation and desensitization and by mediating their resensitization. Does not show subunit-specific AMPA receptor regulation and regulates all AMPAR subunits. This is Voltage-dependent calcium channel gamma-8 subunit from Homo sapiens (Human).